Here is a 144-residue protein sequence, read N- to C-terminus: Large ribosomal subunit protein uL15 (144 aa).

The interval 1 to 54 (MRLNTLSPAPGRVTSRKRVGRGIGSGLGKTAGRGHKGLKSRSGGTVKPGFEGGQ) is disordered. Residues 21-31 (RGIGSGLGKTA) show a composition bias toward gly residues.

The protein belongs to the universal ribosomal protein uL15 family. Part of the 50S ribosomal subunit.

Its function is as follows. Binds to the 23S rRNA. This chain is Large ribosomal subunit protein uL15, found in Teredinibacter turnerae (strain ATCC 39867 / T7901).